We begin with the raw amino-acid sequence, 153 residues long: MAKIKPVHILIVEARFYDDMADAMLDGAKHALDAAGATYDIVTVPGALEIPAAIAMALDGADEGGAEYDGFVALGMVIRGETYHFDIVANESARALMDLAVSESLALGNGILTVENDEQAWARARRTEGDKGGFAARAALTMIELKQRLGAEK.

5-amino-6-(D-ribitylamino)uracil contacts are provided by residues Phe-16, 47-49 (ALE), and 76-78 (MVI). 81–82 (ET) provides a ligand contact to (2S)-2-hydroxy-3-oxobutyl phosphate. The Proton donor role is filled by His-84. Asn-109 serves as a coordination point for 5-amino-6-(D-ribitylamino)uracil. Arg-123 contributes to the (2S)-2-hydroxy-3-oxobutyl phosphate binding site.

Belongs to the DMRL synthase family.

It carries out the reaction (2S)-2-hydroxy-3-oxobutyl phosphate + 5-amino-6-(D-ribitylamino)uracil = 6,7-dimethyl-8-(1-D-ribityl)lumazine + phosphate + 2 H2O + H(+). It participates in cofactor biosynthesis; riboflavin biosynthesis; riboflavin from 2-hydroxy-3-oxobutyl phosphate and 5-amino-6-(D-ribitylamino)uracil: step 1/2. Functionally, catalyzes the formation of 6,7-dimethyl-8-ribityllumazine by condensation of 5-amino-6-(D-ribitylamino)uracil with 3,4-dihydroxy-2-butanone 4-phosphate. This is the penultimate step in the biosynthesis of riboflavin. In Rhizobium meliloti (strain 1021) (Ensifer meliloti), this protein is 6,7-dimethyl-8-ribityllumazine synthase 1.